Here is a 368-residue protein sequence, read N- to C-terminus: Propane 2-monooxygenase, hydroxylase component small subunit (368 aa).

This sequence belongs to the TmoE/XamoE family. In terms of assembly, the propane 2-monooxygenase multicomponent enzyme system is composed of an electron transfer component and a monooxygenase component interacting with the effector protein MimD. The electron transfer component is composed of a reductase (MimB), and the monooxygenase component is formed by a large subunit (MimA) and a small subunit (MimC). Requires the presence of the chaperonin-like protein MimG to ensure a productive folding, resulting of a soluble MimC, which leads to the active form of MimABCD.

It catalyses the reaction propane + NADH + O2 + H(+) = propan-2-ol + NAD(+) + H2O. The enzyme catalyses acetone + NADH + O2 + H(+) = hydroxyacetone + NAD(+) + H2O. It carries out the reaction butan-2-one + NADH + O2 + H(+) = 1-hydroxy-2-butanone + NAD(+) + H2O. The catalysed reaction is phenol + NADH + O2 + H(+) = hydroquinone + NAD(+) + H2O. Functionally, component of the propane 2-monooxygenase multicomponent enzyme system which is involved in the degradation of propane via the O2-dependent hydroxylation of propane. Also involved in the degradation of acetone via the O2-dependent hydroxylation of acetone. Also able to catalyze the oxidation of phenol, methylethylketone (2-butanone), 1-propanol and 2-propanol. The sequence is that of Propane 2-monooxygenase, hydroxylase component small subunit from Mycolicibacterium goodii (Mycobacterium goodii).